Consider the following 554-residue polypeptide: 3-(3-hydroxy-phenyl)propionate/3-hydroxycinnamic acid hydroxylase (554 aa).

Residues 17–46 (QVAI…VVEK) and 285–295 (FRIDRVLLAGD) contribute to the FAD site.

This sequence belongs to the PheA/TfdB FAD monooxygenase family. The cofactor is FAD.

The catalysed reaction is 3-(3-hydroxyphenyl)propanoate + NADH + O2 + H(+) = 3-(2,3-dihydroxyphenyl)propanoate + NAD(+) + H2O. It catalyses the reaction (2E)-3-(3-hydroxyphenyl)prop-2-enoate + NADH + O2 + H(+) = (2E)-3-(2,3-dihydroxyphenyl)prop-2-enoate + NAD(+) + H2O. The protein operates within aromatic compound metabolism; 3-phenylpropanoate degradation. Functionally, catalyzes the insertion of one atom of molecular oxygen into position 2 of the phenyl ring of 3-(3-hydroxyphenyl)propionate (3-HPP) and hydroxycinnamic acid (3HCI). This chain is 3-(3-hydroxy-phenyl)propionate/3-hydroxycinnamic acid hydroxylase, found in Escherichia coli O8 (strain IAI1).